Here is a 436-residue protein sequence, read N- to C-terminus: 3-ketoacyl-CoA thiolase (436 aa).

Catalysis depends on C99, which acts as the Acyl-thioester intermediate. Catalysis depends on proton acceptor residues H392 and C422.

Belongs to the thiolase-like superfamily. Thiolase family. Heterotetramer of two alpha chains (FadJ) and two beta chains (FadI).

Its subcellular location is the cytoplasm. The enzyme catalyses an acyl-CoA + acetyl-CoA = a 3-oxoacyl-CoA + CoA. It functions in the pathway lipid metabolism; fatty acid beta-oxidation. In terms of biological role, catalyzes the final step of fatty acid oxidation in which acetyl-CoA is released and the CoA ester of a fatty acid two carbons shorter is formed. This is 3-ketoacyl-CoA thiolase from Shewanella oneidensis (strain ATCC 700550 / JCM 31522 / CIP 106686 / LMG 19005 / NCIMB 14063 / MR-1).